Consider the following 146-residue polypeptide: Suppressor APC domain-containing protein 1 (146 aa).

Residues 121–146 are disordered; the sequence is HRKGVTQSTGEVVSQAPPGPKGPTLV. A compositionally biased stretch (pro residues) spans 137 to 146; sequence PPGPKGPTLV.

The polypeptide is Suppressor APC domain-containing protein 1 (Sapcd1) (Mus musculus (Mouse)).